A 251-amino-acid chain; its full sequence is Hydroxyacylglutathione hydrolase (251 aa).

Residues His53, His55, Asp57, His58, His110, Asp127, and His165 each coordinate Zn(2+).

This sequence belongs to the metallo-beta-lactamase superfamily. Glyoxalase II family. As to quaternary structure, monomer. Zn(2+) serves as cofactor.

The enzyme catalyses an S-(2-hydroxyacyl)glutathione + H2O = a 2-hydroxy carboxylate + glutathione + H(+). Its pathway is secondary metabolite metabolism; methylglyoxal degradation; (R)-lactate from methylglyoxal: step 2/2. Its function is as follows. Thiolesterase that catalyzes the hydrolysis of S-D-lactoyl-glutathione to form glutathione and D-lactic acid. The protein is Hydroxyacylglutathione hydrolase of Salmonella paratyphi A (strain ATCC 9150 / SARB42).